Here is a 115-residue protein sequence, read N- to C-terminus: Cytochrome c oxidase assembly protein COX16 homolog, mitochondrial (115 aa).

The Mitochondrial matrix portion of the chain corresponds to 1–6 (MSRLKF). The chain crosses the membrane as a helical span at residues 7 to 29 (VRVGLPFFAIVLGSAYGLHFFQQ). The Mitochondrial intermembrane segment spans residues 30-115 (VRFDFRKIKQ…RKVRELKSNV (86 aa)).

It belongs to the COX16 family.

It is found in the mitochondrion inner membrane. Functionally, required for the assembly of the mitochondrial respiratory chain complex IV (CIV), also known as cytochrome c oxidase. The chain is Cytochrome c oxidase assembly protein COX16 homolog, mitochondrial from Caenorhabditis elegans.